We begin with the raw amino-acid sequence, 251 residues long: Aspartate/glutamate leucyltransferase (251 aa).

Belongs to the R-transferase family. Bpt subfamily.

The protein localises to the cytoplasm. It carries out the reaction N-terminal L-glutamyl-[protein] + L-leucyl-tRNA(Leu) = N-terminal L-leucyl-L-glutamyl-[protein] + tRNA(Leu) + H(+). It catalyses the reaction N-terminal L-aspartyl-[protein] + L-leucyl-tRNA(Leu) = N-terminal L-leucyl-L-aspartyl-[protein] + tRNA(Leu) + H(+). In terms of biological role, functions in the N-end rule pathway of protein degradation where it conjugates Leu from its aminoacyl-tRNA to the N-termini of proteins containing an N-terminal aspartate or glutamate. This is Aspartate/glutamate leucyltransferase from Xanthomonas oryzae pv. oryzae (strain MAFF 311018).